Reading from the N-terminus, the 657-residue chain is Translation factor GUF1, mitochondrial (657 aa).

Residues 1 to 39 constitute a mitochondrion transit peptide; the sequence is MRGCLQSVKWLTSALRPSQSLASSTRYPRRLLSTSAPRN. A tr-type G domain is found at 59–239; that stretch reads ERFRNFCIVA…TVIEQIPAPV (181 aa). Residues 109 to 116, 173 to 177, and 227 to 230 contribute to the GTP site; these read TVKAQTCS, LAFAE, and LLPT.

Belongs to the TRAFAC class translation factor GTPase superfamily. Classic translation factor GTPase family. LepA subfamily.

The protein localises to the mitochondrion inner membrane. It carries out the reaction GTP + H2O = GDP + phosphate + H(+). In terms of biological role, promotes mitochondrial protein synthesis. May act as a fidelity factor of the translation reaction, by catalyzing a one-codon backward translocation of tRNAs on improperly translocated ribosomes. Binds to mitochondrial ribosomes in a GTP-dependent manner. The polypeptide is Translation factor GUF1, mitochondrial (Ajellomyces capsulatus (strain NAm1 / WU24) (Darling's disease fungus)).